The following is a 92-amino-acid chain: MELRVIEKTDTELRIEIAGEDHTFMNVLKGVLLETDDVAAATYDMNPEQSGGQTEPVLTVKSESGDPLDVLAEGAESITDRTGALRDAVKAA.

The protein belongs to the archaeal Rpo11/eukaryotic RPB11/RPC19 RNA polymerase subunit family. In terms of assembly, part of the RNA polymerase complex.

It localises to the cytoplasm. The enzyme catalyses RNA(n) + a ribonucleoside 5'-triphosphate = RNA(n+1) + diphosphate. In terms of biological role, DNA-dependent RNA polymerase (RNAP) catalyzes the transcription of DNA into RNA using the four ribonucleoside triphosphates as substrates. The polypeptide is DNA-directed RNA polymerase subunit Rpo11 (Halorubrum lacusprofundi (strain ATCC 49239 / DSM 5036 / JCM 8891 / ACAM 34)).